The chain runs to 402 residues: Protein FixF (402 aa).

This chain is Protein FixF (fixF), found in Sinorhizobium fredii (strain NBRC 101917 / NGR234).